We begin with the raw amino-acid sequence, 512 residues long: ATP synthase subunit alpha (512 aa).

169–176 is a binding site for ATP; sequence GDRQTGKT.

It belongs to the ATPase alpha/beta chains family. In terms of assembly, F-type ATPases have 2 components, CF(1) - the catalytic core - and CF(0) - the membrane proton channel. CF(1) has five subunits: alpha(3), beta(3), gamma(1), delta(1), epsilon(1). CF(0) has three main subunits: a(1), b(2) and c(9-12). The alpha and beta chains form an alternating ring which encloses part of the gamma chain. CF(1) is attached to CF(0) by a central stalk formed by the gamma and epsilon chains, while a peripheral stalk is formed by the delta and b chains.

The protein resides in the cell membrane. The catalysed reaction is ATP + H2O + 4 H(+)(in) = ADP + phosphate + 5 H(+)(out). Functionally, produces ATP from ADP in the presence of a proton gradient across the membrane. The alpha chain is a regulatory subunit. This Elusimicrobium minutum (strain Pei191) protein is ATP synthase subunit alpha.